A 125-amino-acid polypeptide reads, in one-letter code: Natriuretic peptide GNP1 (125 aa).

An N-terminal signal peptide occupies residues 1–25; the sequence is MDPRLVRAGSLVLLLALLVQDQGAA. Disordered regions lie at residues 23-78 and 105-125; these read GAAH…PAFK and VSGMGCNKFDPNKGSSSTGKK. A propeptide spanning residues 26–85 is cleaved from the precursor; it reads HPARAGQKYKPLIRRSEEDSQALGQEGDVAARAADEEEDAAGPGDALRQPAFKTLLASRE. Residues cysteine 94 and cysteine 110 are joined by a disulfide bond.

It belongs to the natriuretic peptide family. Expressed by the venom gland.

Its subcellular location is the secreted. Functionally, exhibits natriuretic and vasodepressor activity. Acts by stimulating cGMP. The chain is Natriuretic peptide GNP1 from Varanus varius (Lace monitor lizard).